A 493-amino-acid chain; its full sequence is Probable cytochrome P450 CYP36A1 (493 aa).

3 consecutive transmembrane segments (helical) span residues 1 to 21 (MLFA…CRFA), 60 to 80 (GGIF…YDML), and 290 to 310 (QLIV…IIVL). A heme-binding site is contributed by C440.

Belongs to the cytochrome P450 family. Heme serves as cofactor.

The protein localises to the membrane. Its function is as follows. Cytochromes P450 are a group of heme-thiolate monooxygenases. They oxidize a variety of structurally unrelated compounds, including steroids, fatty acids, and xenobiotics. This Caenorhabditis elegans protein is Probable cytochrome P450 CYP36A1 (cyp-36A1).